The primary structure comprises 174 residues: Endoribonuclease YbeY (174 aa).

Positions 129, 133, and 139 each coordinate Zn(2+).

Belongs to the endoribonuclease YbeY family. The cofactor is Zn(2+).

The protein resides in the cytoplasm. Functionally, single strand-specific metallo-endoribonuclease involved in late-stage 70S ribosome quality control and in maturation of the 3' terminus of the 16S rRNA. The polypeptide is Endoribonuclease YbeY (Lactobacillus delbrueckii subsp. bulgaricus (strain ATCC 11842 / DSM 20081 / BCRC 10696 / JCM 1002 / NBRC 13953 / NCIMB 11778 / NCTC 12712 / WDCM 00102 / Lb 14)).